We begin with the raw amino-acid sequence, 629 residues long: MAGSPFTTALLSAWTLSTVAVGYPNGPWYQTPLGPDVVRDPTRYPGAIEKTVDYVVVGGGASGLTVAARLSEDPSVTVAIVEAGSFYQEVSNASVVPGYAADYLTGHIPPELDWGFNTEPQAGADGRVKHYTNAKTLGGNSAFNLMAYMTTSVGAMQKWAEEVDDDSWTYANVTRYFQKSLNFTGIDPHKRRANSTPELNPADVGYGGPLDVTYPNYAQPFSSWVKKAFDQVGMRPVGGFMSGELFGSSWVLDTINHTDGQRASSAKTFLEPILHRRENLFLYNRTLAERVLFDADRTATGVQASRGKTVFNLTATKEVVLTAGGLMTPQLLQVSGVGNAALLQELRIPVVLDAPQVGQQMEDHISFGVAHRVDVETNSALKYAGPRQHAVEEFNEAQAGILSSPGPDFGGFADIPSELRNFSASTHADLAGLPKDWPEGFFISFPVDVGFPQDGYNYAMIVCTLMTPMSRGHISIRSPSMHDRPVIDPRWLTSTSDVEIAVAAVRRIRQYLQMPVLERNVLVGGEVAPGPEVQTFAEIHDYLKKNFNSMSHPACTCRMGKKGDPDAVVDPKGRVFGVKNLRIADASVFRFLPPGLPLGVVYMVAEKIADDIKHDQKHGAGEEGLRTEF.

Residues 1-22 (MAGSPFTTALLSAWTLSTVAVG) form the signal peptide. Residues 61-62 (AS) and 82-83 (EA) each bind FAD. Asparagine 92 is a glycosylation site (N-linked (GlcNAc...) asparagine). 144 to 147 (NLMA) is an FAD binding site. Asparagine 172, asparagine 182, asparagine 256, asparagine 284, asparagine 312, and asparagine 421 each carry an N-linked (GlcNAc...) asparagine glycan. Histidine 552 functions as the Proton acceptor in the catalytic mechanism. Residues alanine 586 and 597–598 (PL) contribute to the FAD site.

This sequence belongs to the GMC oxidoreductase family. As to quaternary structure, homodimer. It depends on FAD as a cofactor.

The protein operates within secondary metabolite biosynthesis. Dehydrogenase; part of the gene cluster that mediates the biosynthesis of pyranoviolin A, a pyranonigrin analog with a C-3 methoxy group. Initially, the PKS portion of pyvA synthesizes C-10 carbon chain from 5 molecules of malonyl-CoA, which is then condensed with the thiolation (T) domain-bound glycine activated by the adenylation (A) domain. The subsequent chain release by Dieckmann condensation (DKC) could be catalyzed by the TE domain present at the C-terminus of pyvA and/or the alpha/beta hydrolase pyvD, installing the tetramic acid moiety. The FAD-dependent monooxygenase pyvC next epoxidizes one of the olefins of the polyketide part, and the epoxide ring-opening induces the dihydro-gamma-pyrone ring formation. The cytochrome P450 monooxygeanse pyvB would be responsible for the 2 consecutive reactions, in which the dihydro-gamma-pyrone is oxidized to gamma-pyrone and C-7 is hydroxylated to yield pyranonigrin F. Finally, the O-methyltransferase pyvH methylates the C-3 hydroxy group to complete the biosynthesis. The polypeptide is Dehydrogenase pyvF (Aspergillus violaceofuscus (strain CBS 115571)).